A 246-amino-acid polypeptide reads, in one-letter code: Exosome complex component SKI6 (246 aa).

The protein belongs to the RNase PH family. In terms of assembly, component of the RNA exosome complex. Specifically part of the catalytically inactive RNA exosome core complex (Exo-9) which may associate with the catalytic subunits RRP6 and DIS3 in cytoplasmic- and nuclear-specific RNA exosome complex forms. Exo-9 is formed by a hexameric base ring of RNase PH domain-containing subunits and a cap ring consisting of CSL4, RRP4 and RRP40.

Its subcellular location is the cytoplasm. It is found in the nucleus. It localises to the nucleolus. Functionally, non-catalytic component of the RNA exosome complex which has 3'-&gt;5' exoribonuclease activity and participates in a multitude of cellular RNA processing and degradation events. In the nucleus, the RNA exosome complex is involved in proper maturation of stable RNA species such as rRNA, snRNA and snoRNA, in the elimination of RNA processing by-products and non-coding 'pervasive' transcripts, such as antisense RNA species and cryptic unstable transcripts (CUTs), and of mRNAs with processing defects, thereby limiting or excluding their export to the cytoplasm. In the cytoplasm, the RNA exosome complex is involved in general mRNA turnover and in RNA surveillance pathways, preventing translation of aberrant mRNAs. The catalytic inactive RNA exosome core complex of 9 subunits (Exo-9) is proposed to play a pivotal role in the binding and presentation of RNA for ribonucleolysis, and to serve as a scaffold for the association with catalytic subunits and accessory proteins or complexes. SKI6 is part of the hexameric ring of RNase PH domain-containing subunits proposed to form a central channel which threads RNA substrates for degradation. The protein is Exosome complex component SKI6 (SKI6) of Saccharomyces cerevisiae (strain ATCC 204508 / S288c) (Baker's yeast).